The primary structure comprises 224 residues: Putative O-methyltransferase MLBr01075 (224 aa).

S-adenosyl-L-methionine-binding positions include Val51, Glu73, 75–76, Ser81, Asp99, and Ile100; that span reads GT. Asp147 is a substrate binding site. Asp149 serves as a coordination point for S-adenosyl-L-methionine.

Belongs to the class I-like SAM-binding methyltransferase superfamily. Cation-dependent O-methyltransferase family.

The sequence is that of Putative O-methyltransferase MLBr01075 from Mycobacterium leprae (strain Br4923).